A 128-amino-acid chain; its full sequence is MPGMRLVCRLAHGHFPRKGQRRRSLTVWKAETSRADCLGAPNIRTAPLGRSEKRTAICFSTGAQDSSQRAPFRLQNPGQLLQLGMHSLHLHPELPTTDPAFFCKLHFIKGNDPYCLTISHVKSVLTFS.

High expression in pituitary gland and weak in pancreas.

This is an uncharacterized protein from Homo sapiens (Human).